The following is a 141-amino-acid chain: Endoribonuclease YbeY (141 aa).

3 residues coordinate Zn(2+): H105, H109, and D115.

Belongs to the endoribonuclease YbeY family. It depends on Zn(2+) as a cofactor.

The protein localises to the cytoplasm. Single strand-specific metallo-endoribonuclease involved in late-stage 70S ribosome quality control and in maturation of the 3' terminus of the 16S rRNA. The chain is Endoribonuclease YbeY from Chloroherpeton thalassium (strain ATCC 35110 / GB-78).